Consider the following 267-residue polypeptide: 5'-nucleotidase SurE (267 aa).

A divalent metal cation contacts are provided by Asp9, Asp10, Ser41, and Asn95.

The protein belongs to the SurE nucleotidase family. A divalent metal cation serves as cofactor.

Its subcellular location is the cytoplasm. The catalysed reaction is a ribonucleoside 5'-phosphate + H2O = a ribonucleoside + phosphate. Nucleotidase that shows phosphatase activity on nucleoside 5'-monophosphates. The sequence is that of 5'-nucleotidase SurE from Aeropyrum pernix (strain ATCC 700893 / DSM 11879 / JCM 9820 / NBRC 100138 / K1).